Consider the following 310-residue polypeptide: 4-hydroxyproline epimerase (310 aa).

Residue Cys-88 is the Proton acceptor of the active site. Residues 89–90 (GH), His-208, and Asp-232 each bind substrate. The active-site Proton donor is the Cys-236. Residue 237–238 (GT) participates in substrate binding.

Belongs to the proline racemase family. As to quaternary structure, homodimer.

It carries out the reaction trans-4-hydroxy-L-proline = cis-4-hydroxy-D-proline. Allows intracellular utilization of 4-hydroxyproline, one of the major constituents of host collagen, by converting 4-hydroxy-L-proline to 4-hydroxy-D-proline, which can be further metabolized by intracellular 4-hydroxy-D-proline oxidases. The polypeptide is 4-hydroxyproline epimerase (Burkholderia cenocepacia (strain HI2424)).